The primary structure comprises 329 residues: Ankyrin repeat and SOCS box protein 5 (329 aa).

ANK repeat units lie at residues Ala-69–Ala-98, Asp-102–Ala-131, Asp-135–Leu-164, Cys-167–Gln-196, His-200–Lys-229, and Tyr-232–Ala-261. The 52-residue stretch at Met-278 to Arg-329 folds into the SOCS box domain.

This sequence belongs to the ankyrin SOCS box (ASB) family. In terms of tissue distribution, expressed in endothelial and smooth muscle cells of collateral arteries as well as in satellite cells.

The protein operates within protein modification; protein ubiquitination. May be a substrate-recognition component of a SCF-like ECS (Elongin-Cullin-SOCS-box protein) E3 ubiquitin-protein ligase complex which mediates the ubiquitination and subsequent proteasomal degradation of target proteins. May play a role in the initiation of arteriogenesis. This is Ankyrin repeat and SOCS box protein 5 (ASB5) from Oryctolagus cuniculus (Rabbit).